The following is a 265-amino-acid chain: Neuronal membrane glycoprotein M6-b (265 aa).

A helical transmembrane segment spans residues 31–51 (GGVPYASLVATILCFSGVALF). Asn-73 is a glycosylation site (N-linked (GlcNAc...) asparagine). Transmembrane regions (helical) follow at residues 90–110 (VIYGIASFFFLYGIILLAEGF) and 136–156 (FVFLTYVLGVAWLGVFGFSAV). Residue Asn-177 is glycosylated (N-linked (GlcNAc...) asparagine). The helical transmembrane segment at 224-244 (LFIVACAGAGATVIALLIYMM) threads the bilayer. Phosphoserine is present on Ser-257.

Belongs to the myelin proteolipid protein family. Interacts with SERT. Highly expressed in the ventral medullary surface, moderately in the cerebral cortex and cerebellum, poorly in lung and kidney, and not at all in heart, skeletal muscle, liver, stomach or stomach.

Its subcellular location is the membrane. The protein resides in the cell membrane. In terms of biological role, may be involved in neural development. Involved in regulation of osteoblast function and bone formation. Involved in matrix vesicle release by osteoblasts; this function seems to involve maintenance of the actin cytoskeleton. May be involved in cellular trafficking of SERT and thereby in regulation of serotonin uptake. The sequence is that of Neuronal membrane glycoprotein M6-b (Gpm6b) from Rattus norvegicus (Rat).